We begin with the raw amino-acid sequence, 203 residues long: Holliday junction branch migration complex subunit RuvA (203 aa).

The segment at 1–64 is domain I; that stretch reads MIGRLRGIIL…EDAQLLYGFN (64 aa). The domain II stretch occupies residues 65-142; it reads NKQERTLFKE…KGLHGDLFTP (78 aa). Residues 143-154 form a flexible linker region; sequence AVDLVLTSPASP. Positions 155–203 are domain III; that stretch reads GSEDAEQEAVAALVALGYKPQEASRMVSKIARPDASSETLIRDALRAAL.

Belongs to the RuvA family. In terms of assembly, homotetramer. Forms an RuvA(8)-RuvB(12)-Holliday junction (HJ) complex. HJ DNA is sandwiched between 2 RuvA tetramers; dsDNA enters through RuvA and exits via RuvB. An RuvB hexamer assembles on each DNA strand where it exits the tetramer. Each RuvB hexamer is contacted by two RuvA subunits (via domain III) on 2 adjacent RuvB subunits; this complex drives branch migration. In the full resolvosome a probable DNA-RuvA(4)-RuvB(12)-RuvC(2) complex forms which resolves the HJ.

The protein localises to the cytoplasm. In terms of biological role, the RuvA-RuvB-RuvC complex processes Holliday junction (HJ) DNA during genetic recombination and DNA repair, while the RuvA-RuvB complex plays an important role in the rescue of blocked DNA replication forks via replication fork reversal (RFR). RuvA specifically binds to HJ cruciform DNA, conferring on it an open structure. The RuvB hexamer acts as an ATP-dependent pump, pulling dsDNA into and through the RuvAB complex. HJ branch migration allows RuvC to scan DNA until it finds its consensus sequence, where it cleaves and resolves the cruciform DNA. The polypeptide is Holliday junction branch migration complex subunit RuvA (Salmonella schwarzengrund (strain CVM19633)).